The chain runs to 658 residues: Scarecrow-like protein 28 (658 aa).

Disordered regions lie at residues 43 to 85, 96 to 115, and 209 to 265; these read PCSS…TSGC, LATT…NNNR, and PAAV…NNNR. Residues 214–228 are compositionally biased toward low complexity; it reads EASGGSSTSASSESR. Residues 265–654 form the GRAS domain; it reads RNDLQRDFEL…QPLYTISAWT (390 aa). The tract at residues 272 to 336 is leucine repeat I (LRI); it reads FELVNLLTGC…VARMWPHIFH (65 aa). Residues 355-420 are VHIID; it reads LRFLNQVTPI…NPPHHVRITG (66 aa). The short motif at 386–390 is the VHIID element; the sequence is VHIID. The tract at residues 430 to 462 is leucine repeat II (LRII); sequence ETGDRLHGFAEAMNLQFEFHPVVDRLEDVRLWM. The interval 471–563 is PFYRE; it reads VAVNCVMQMH…EMLFGREIRN (93 aa). The tract at residues 566-654 is SAW; the sequence is ACEGSHRQER…QPLYTISAWT (89 aa).

Belongs to the GRAS family. As to quaternary structure, interacts with SNRNP35 and CYP95. In terms of tissue distribution, expressed in roots and sepals.

The protein resides in the nucleus. Probable transcription factor involved in plant development. The sequence is that of Scarecrow-like protein 28 (SCL28) from Arabidopsis thaliana (Mouse-ear cress).